The following is a 386-amino-acid chain: Delta(7)-sterol 5(6)-desaturase (386 aa).

Helical transmembrane passes span 119–139 (VLSL…IVAY), 172–192 (IPVM…GYSF), and 206–226 (AILW…YFLH). In terms of domain architecture, Fatty acid hydroxylase spans 214–337 (FILFTDCGIY…FTTLWDRLGN (124 aa)). The short motif at 226 to 230 (HRWLH) is the Histidine box-1 element. The Histidine box-2 signature appears at 239–243 (HKPHH). Residues 272–292 (PLLFPLHKVLYLLLFTFVNFW) traverse the membrane as a helical segment. Positions 314–318 (HTVHH) match the Histidine box-3 motif.

It belongs to the sterol desaturase family. Requires Fe cation as cofactor.

The protein localises to the endoplasmic reticulum membrane. The enzyme catalyses a Delta(7)-sterol + 2 Fe(II)-[cytochrome b5] + O2 + 2 H(+) = a Delta(5),Delta(7)-sterol + 2 Fe(III)-[cytochrome b5] + 2 H2O. Its pathway is steroid metabolism; ergosterol biosynthesis; ergosterol from zymosterol: step 3/5. In terms of biological role, catalyzes the introduction of a C-5 double bond in the B ring of ergosterol. May contribute to the regulation of ergosterol biosynthesis. The chain is Delta(7)-sterol 5(6)-desaturase (ERG3) from Candida dubliniensis (strain CD36 / ATCC MYA-646 / CBS 7987 / NCPF 3949 / NRRL Y-17841) (Yeast).